The chain runs to 367 residues: 2-aminoethylphosphonate--pyruvate transaminase (367 aa).

Lys194 is subject to N6-(pyridoxal phosphate)lysine.

This sequence belongs to the class-V pyridoxal-phosphate-dependent aminotransferase family. PhnW subfamily. Homodimer. Pyridoxal 5'-phosphate is required as a cofactor.

The enzyme catalyses (2-aminoethyl)phosphonate + pyruvate = phosphonoacetaldehyde + L-alanine. Its function is as follows. Involved in phosphonate degradation. The chain is 2-aminoethylphosphonate--pyruvate transaminase from Salmonella choleraesuis (strain SC-B67).